The primary structure comprises 536 residues: Phosphoenolpyruvate carboxykinase (ATP) (536 aa).

3 residues coordinate substrate: Arg61, Tyr195, and Lys201. Residues Lys201, His220, and 236–244 (GLSGTGKTT) each bind ATP. Mn(2+)-binding residues include Lys201 and His220. Asp257 contacts Mn(2+). ATP contacts are provided by Glu285, Arg322, and Thr447. Arg322 is a binding site for substrate.

The protein belongs to the phosphoenolpyruvate carboxykinase (ATP) family. Requires Mn(2+) as cofactor.

The protein localises to the cytoplasm. The enzyme catalyses oxaloacetate + ATP = phosphoenolpyruvate + ADP + CO2. It participates in carbohydrate biosynthesis; gluconeogenesis. Functionally, involved in the gluconeogenesis. Catalyzes the conversion of oxaloacetate (OAA) to phosphoenolpyruvate (PEP) through direct phosphoryl transfer between the nucleoside triphosphate and OAA. This chain is Phosphoenolpyruvate carboxykinase (ATP), found in Sinorhizobium medicae (strain WSM419) (Ensifer medicae).